We begin with the raw amino-acid sequence, 358 residues long: MLGKCIKKASSTVGQSIRYSSGDVRRVTLIPGDGIGPEISASVQKIFEAADAPIAWDPVDVTPVKGRDGVFRIPSRCIELMHANKVGLKGPLETPIGKGHRSLNLAVRKEFSLYANVRPCRSLEGHKTLYDNVDVVTIRENTEGEYSGIEHEIVPGVVQSIKLITETASRNVASFAFEYARQNGRKVVTAVHKANIMRQSDGLFLSICREQAALYPDIKFKEAYLDTVCLNMVQDPSQYDVLVMPNLYGDILSDLCAGLVGGLGVTPSGNIGKGAAVFESVHGTAPDIAGQDKANPTALLLSAVMMLRYMNLPQHAARIEKAVFDAIADGRAKTGDLGGTGTCSSFTADVCARVKDLE.

Positions 108, 118, 139, and 226 each coordinate substrate. Mg(2+) contacts are provided by Asp-226, Asp-250, and Asp-254.

This sequence belongs to the isocitrate and isopropylmalate dehydrogenases family. As to quaternary structure, heterooligomer of subunits alpha, beta, and gamma in the apparent ratio of 2:1:1. The cofactor is Mg(2+). Requires Mn(2+) as cofactor.

It is found in the mitochondrion. The enzyme catalyses D-threo-isocitrate + NAD(+) = 2-oxoglutarate + CO2 + NADH. This Caenorhabditis elegans protein is Probable isocitrate dehydrogenase [NAD] subunit alpha, mitochondrial (idha-1).